Here is a 94-residue protein sequence, read N- to C-terminus: MASSSTEGQAAARGRKKSWTGKVVSDSMDKAIIVAVERRVQHPVYKKYFKKTTRLMAHDEKNEAGMGDLVKVVECRPLSKRKSCRLVEIVEKAK.

Residues methionine 1 to lysine 22 are disordered.

This sequence belongs to the universal ribosomal protein uS17 family. In terms of assembly, part of the 30S ribosomal subunit.

Its function is as follows. One of the primary rRNA binding proteins, it binds specifically to the 5'-end of 16S ribosomal RNA. The polypeptide is Small ribosomal subunit protein uS17 (Chlorobium luteolum (strain DSM 273 / BCRC 81028 / 2530) (Pelodictyon luteolum)).